Consider the following 236-residue polypeptide: 7-cyano-7-deazaguanine synthase (236 aa).

7–17 contacts ATP; the sequence is CSGGLDSVTLA. Residues Cys185, Cys193, Cys196, and Cys199 each coordinate Zn(2+).

The protein belongs to the QueC family. Zn(2+) is required as a cofactor.

It carries out the reaction 7-carboxy-7-deazaguanine + NH4(+) + ATP = 7-cyano-7-deazaguanine + ADP + phosphate + H2O + H(+). It functions in the pathway purine metabolism; 7-cyano-7-deazaguanine biosynthesis. Functionally, catalyzes the ATP-dependent conversion of 7-carboxy-7-deazaguanine (CDG) to 7-cyano-7-deazaguanine (preQ(0)). In Rhizobium johnstonii (strain DSM 114642 / LMG 32736 / 3841) (Rhizobium leguminosarum bv. viciae), this protein is 7-cyano-7-deazaguanine synthase.